The sequence spans 163 residues: Ribosome maturation factor RimP (163 aa).

It belongs to the RimP family.

The protein localises to the cytoplasm. Required for maturation of 30S ribosomal subunits. In Polynucleobacter asymbioticus (strain DSM 18221 / CIP 109841 / QLW-P1DMWA-1) (Polynucleobacter necessarius subsp. asymbioticus), this protein is Ribosome maturation factor RimP.